The chain runs to 501 residues: Probable cytosol aminopeptidase (501 aa).

Residues Lys267 and Asp272 each coordinate Mn(2+). Lys279 is a catalytic residue. 3 residues coordinate Mn(2+): Asp290, Asp349, and Glu351. The active site involves Arg353.

It belongs to the peptidase M17 family. Requires Mn(2+) as cofactor.

Its subcellular location is the cytoplasm. It carries out the reaction Release of an N-terminal amino acid, Xaa-|-Yaa-, in which Xaa is preferably Leu, but may be other amino acids including Pro although not Arg or Lys, and Yaa may be Pro. Amino acid amides and methyl esters are also readily hydrolyzed, but rates on arylamides are exceedingly low.. The enzyme catalyses Release of an N-terminal amino acid, preferentially leucine, but not glutamic or aspartic acids.. In terms of biological role, presumably involved in the processing and regular turnover of intracellular proteins. Catalyzes the removal of unsubstituted N-terminal amino acids from various peptides. The sequence is that of Probable cytosol aminopeptidase from Hamiltonella defensa subsp. Acyrthosiphon pisum (strain 5AT).